The chain runs to 228 residues: Sodium channel regulatory subunit beta-4 (228 aa).

Positions 1 to 30 are cleaved as a signal peptide; that stretch reads MPGAGDGGKAPARWLGTGLLGLFLLPVTLS. Residues 31-148 enclose the Ig-like C2-type domain; sequence LEVSVGKATD…NNLQHHATIF (118 aa). Topologically, residues 31-162 are extracellular; sequence LEVSVGKATD…DRLEEVDNTV (132 aa). N-linked (GlcNAc...) asparagine glycans are attached at residues Asn45, Asn71, and Asn113. A disulfide bridge connects residues Cys53 and Cys131. Residues 163–183 traverse the membrane as a helical segment; it reads TLIILAVVGGVIGLLILILLI. The Cytoplasmic segment spans residues 184–228; that stretch reads KKLIIFILKKTREKKKECLVSSSGNDNTENGLPGSKAEEKPPSKV. The segment at 200-228 is disordered; that stretch reads ECLVSSSGNDNTENGLPGSKAEEKPPSKV. Positions 203-213 are enriched in polar residues; sequence VSSSGNDNTEN. Residues 219 to 228 are compositionally biased toward basic and acidic residues; sequence KAEEKPPSKV.

It belongs to the sodium channel auxiliary subunit SCN4B (TC 8.A.17) family. In terms of assembly, a voltage-gated sodium (Nav) channel consists of an ion-conducting pore-forming alpha subunit functional on its own that is regulated by one or more beta subunits. The beta subunit SCN4B is disulfide-linked to the pore-forming alpha subunit. Interacts with SCN1A; regulatory subunit of SCN1A/Nav1.1. Interacts with SCN2A; regulatory subunit of SCN2A/Nav1.2. Contains an interchain disulfide bond with SCN2A. Post-translationally, N-glycosylated. In terms of tissue distribution, expressed at a high level in dorsal root ganglia, at a lower level in brain, spinal cord, skeletal muscle and heart. Expressed in the atrium.

It localises to the cell membrane. In terms of biological role, regulatory subunit of multiple voltage-gated sodium (Nav) channels directly mediating the depolarization of excitable membranes. Navs, also called VGSCs (voltage-gated sodium channels) or VDSCs (voltage-dependent sodium channels), operate by switching between closed and open conformations depending on the voltage difference across the membrane. In the open conformation they allow Na(+) ions to selectively pass through the pore, along their electrochemical gradient. The influx of Na+ ions provokes membrane depolarization, initiating the propagation of electrical signals throughout cells and tissues. The accessory beta subunits participate in localization and functional modulation of the Nav channels. Modulates the activity of SCN1A/Nav1.1. Modulates the activity of SCN2A/Nav1.2. The protein is Sodium channel regulatory subunit beta-4 of Homo sapiens (Human).